We begin with the raw amino-acid sequence, 491 residues long: GTPase Der (491 aa).

The 164-residue stretch at 3–166 folds into the EngA-type G 1 domain; the sequence is PVIALVGRPN…AALGIFPRDD (164 aa). GTP is bound by residues 9-16, 56-60, and 118-121; these read GRPNVGKS, DTGGI, and NKVD. The tract at residues 164-191 is disordered; the sequence is RDDEGEEGEGEAEVVAEGEEPKRVPGPS. The segment covering 166 to 181 has biased composition (acidic residues); it reads DEGEEGEGEAEVVAEG. The segment covering 182–191 has biased composition (basic and acidic residues); that stretch reads EEPKRVPGPS. One can recognise an EngA-type G 2 domain in the interval 196-369; that stretch reads IKIAIIGRPN…SVQAAFQSAV (174 aa). Residues 202-209, 249-253, and 314-317 contribute to the GTP site; these read GRPNVGKS, DTAGV, and NKWD. The KH-like domain maps to 370 to 454; sequence TRWPTSRLTR…PIRIEYKGGD (85 aa). The segment covering 452 to 464 has biased composition (basic and acidic residues); that stretch reads GGDNPYEGKKNSL. Residues 452–491 are disordered; it reads GGDNPYEGKKNSLTERQVNKKRRLMSHHKKAEKKRRDKKR. Positions 470 to 491 are enriched in basic residues; that stretch reads NKKRRLMSHHKKAEKKRRDKKR.

It belongs to the TRAFAC class TrmE-Era-EngA-EngB-Septin-like GTPase superfamily. EngA (Der) GTPase family. As to quaternary structure, associates with the 50S ribosomal subunit.

GTPase that plays an essential role in the late steps of ribosome biogenesis. In Azotobacter vinelandii (strain DJ / ATCC BAA-1303), this protein is GTPase Der.